The sequence spans 536 residues: Chaperonin GroEL 1 (536 aa).

ATP contacts are provided by residues 29–32, 86–90, G413, 476–478, and D492; these read TLGP, DGTTT, and NAA.

This sequence belongs to the chaperonin (HSP60) family. As to quaternary structure, forms a cylinder of 14 subunits composed of two heptameric rings stacked back-to-back. Interacts with the co-chaperonin GroES.

It is found in the cytoplasm. The catalysed reaction is ATP + H2O + a folded polypeptide = ADP + phosphate + an unfolded polypeptide.. In terms of biological role, together with its co-chaperonin GroES, plays an essential role in assisting protein folding. The GroEL-GroES system forms a nano-cage that allows encapsulation of the non-native substrate proteins and provides a physical environment optimized to promote and accelerate protein folding. The sequence is that of Chaperonin GroEL 1 from Nocardia farcinica (strain IFM 10152).